The following is a 362-amino-acid chain: 3-dehydroquinate synthase (362 aa).

NAD(+) contacts are provided by residues 71 to 76, 105 to 109, 129 to 130, K142, and K151; these read DGEQYK, GVIGD, and TT. Residues E184, H247, and H264 each coordinate Zn(2+).

The protein belongs to the sugar phosphate cyclases superfamily. Dehydroquinate synthase family. NAD(+) serves as cofactor. It depends on Co(2+) as a cofactor. Zn(2+) is required as a cofactor.

The protein localises to the cytoplasm. The catalysed reaction is 7-phospho-2-dehydro-3-deoxy-D-arabino-heptonate = 3-dehydroquinate + phosphate. Its pathway is metabolic intermediate biosynthesis; chorismate biosynthesis; chorismate from D-erythrose 4-phosphate and phosphoenolpyruvate: step 2/7. In terms of biological role, catalyzes the conversion of 3-deoxy-D-arabino-heptulosonate 7-phosphate (DAHP) to dehydroquinate (DHQ). This Haemophilus ducreyi (strain 35000HP / ATCC 700724) protein is 3-dehydroquinate synthase.